The primary structure comprises 759 residues: Phosphoribosylformylglycinamidine synthase subunit PurL (759 aa).

H46 is an active-site residue. Positions 49 and 88 each coordinate ATP. E90 lines the Mg(2+) pocket. Substrate is bound by residues 91 to 94 and R113; that span reads SHNH. H92 functions as the Proton acceptor in the catalytic mechanism. Position 114 (D114) interacts with Mg(2+). Q237 lines the substrate pocket. D265 lines the Mg(2+) pocket. 309 to 311 lines the substrate pocket; the sequence is ESQ. 2 residues coordinate ATP: D498 and G535. Residue N536 participates in Mg(2+) binding. Residue S538 coordinates substrate.

Belongs to the FGAMS family. Monomer. Part of the FGAM synthase complex composed of 1 PurL, 1 PurQ and 2 PurS subunits.

It is found in the cytoplasm. The enzyme catalyses N(2)-formyl-N(1)-(5-phospho-beta-D-ribosyl)glycinamide + L-glutamine + ATP + H2O = 2-formamido-N(1)-(5-O-phospho-beta-D-ribosyl)acetamidine + L-glutamate + ADP + phosphate + H(+). It participates in purine metabolism; IMP biosynthesis via de novo pathway; 5-amino-1-(5-phospho-D-ribosyl)imidazole from N(2)-formyl-N(1)-(5-phospho-D-ribosyl)glycinamide: step 1/2. Part of the phosphoribosylformylglycinamidine synthase complex involved in the purines biosynthetic pathway. Catalyzes the ATP-dependent conversion of formylglycinamide ribonucleotide (FGAR) and glutamine to yield formylglycinamidine ribonucleotide (FGAM) and glutamate. The FGAM synthase complex is composed of three subunits. PurQ produces an ammonia molecule by converting glutamine to glutamate. PurL transfers the ammonia molecule to FGAR to form FGAM in an ATP-dependent manner. PurS interacts with PurQ and PurL and is thought to assist in the transfer of the ammonia molecule from PurQ to PurL. The protein is Phosphoribosylformylglycinamidine synthase subunit PurL of Anaeromyxobacter dehalogenans (strain 2CP-C).